The following is a 220-amino-acid chain: 1-Cys peroxiredoxin A (220 aa).

One can recognise a Thioredoxin domain in the interval 4 to 165 (LTIGDTVPNL…VVRAVDALQT (162 aa)). The active-site Cysteine sulfenic acid (-SOH) intermediate is C46. The Bipartite nuclear localization signal signature appears at 195–218 (KEKFPQGFDTADLPSGKGYLRFTK).

Belongs to the peroxiredoxin family. Prx6 subfamily.

Its subcellular location is the nucleus. It is found in the cytoplasm. It carries out the reaction a hydroperoxide + [thioredoxin]-dithiol = an alcohol + [thioredoxin]-disulfide + H2O. In terms of biological role, thiol-specific peroxidase that catalyzes the reduction of hydrogen peroxide and organic hydroperoxides to water and alcohols, respectively. Seems to contribute to the inhibition of germination during stress. In Oryza sativa subsp. japonica (Rice), this protein is 1-Cys peroxiredoxin A.